The sequence spans 227 residues: Prolactin (227 aa).

A signal peptide spans Met1–Ser28. A disulfide bridge connects residues Cys32 and Cys39. Phosphoserine is present on residues Ser54, Ser62, and Ser118. 2 cysteine pairs are disulfide-bonded: Cys86-Cys202 and Cys219-Cys227.

The protein belongs to the somatotropin/prolactin family. In terms of assembly, interacts with PRLR.

It is found in the secreted. Prolactin acts primarily on the mammary gland by promoting lactation. This Oryctolagus cuniculus (Rabbit) protein is Prolactin (PRL).